The chain runs to 320 residues: N-acetylneuraminate lyase (320 aa).

The aceneuramate site is built by Thr51 and Thr52. The Proton donor role is filled by Tyr143. Residue Lys173 is the Schiff-base intermediate with substrate of the active site. The aceneuramate site is built by Ser175, Gly199, Asp201, Glu202, and Ser218.

The protein belongs to the DapA family. NanA subfamily. Homotetramer. In terms of tissue distribution, isoform 2 is expressed in placenta, liver, kidney, pancreas, spleen, thymus, ovary, small intestine and peripheral blood leukocyte.

The protein resides in the cytoplasm. The catalysed reaction is aceneuramate = aldehydo-N-acetyl-D-mannosamine + pyruvate. It participates in amino-sugar metabolism; N-acetylneuraminate degradation. Its function is as follows. Catalyzes the cleavage of N-acetylneuraminic acid (sialic acid) to form pyruvate and N-acetylmannosamine via a Schiff base intermediate. It prevents sialic acids from being recycled and returning to the cell surface. Involved in the N-glycolylneuraminic acid (Neu5Gc) degradation pathway. Although human is not able to catalyze formation of Neu5Gc due to the inactive CMAHP enzyme, Neu5Gc is present in food and must be degraded. This Homo sapiens (Human) protein is N-acetylneuraminate lyase.